A 192-amino-acid polypeptide reads, in one-letter code: MVVGLFGGSFNPPHEGHALVAEIAIKRLGLDQLWWMVTPGNPLKSRNLLAPLAERIAESERVAADPRIKVTAFEQALGVSYTANTLARVKARNPHVHFIWIMGADSLQTFHKWQKWQEIARTFPIAVIDRPGATLSYLSSKMTRTFDFARIDEDDARVLWKKPAPAWTFIHGPRSGLSSTAIRNGALPGAVG.

Belongs to the NadD family.

The catalysed reaction is nicotinate beta-D-ribonucleotide + ATP + H(+) = deamido-NAD(+) + diphosphate. It participates in cofactor biosynthesis; NAD(+) biosynthesis; deamido-NAD(+) from nicotinate D-ribonucleotide: step 1/1. Its function is as follows. Catalyzes the reversible adenylation of nicotinate mononucleotide (NaMN) to nicotinic acid adenine dinucleotide (NaAD). The polypeptide is Probable nicotinate-nucleotide adenylyltransferase (Rhizobium etli (strain ATCC 51251 / DSM 11541 / JCM 21823 / NBRC 15573 / CFN 42)).